The following is a 320-amino-acid chain: Pyrroline-5-carboxylate reductase 1, mitochondrial (320 aa).

Position 2 is an N-acetylserine (Ser2). NADP(+)-binding positions include 6 to 11 and Ser34; that span reads IGAGQL. Ala8, Gln10, Leu11, Ser34, Asp36, Asn56, Val70, Lys71, and Ala97 together coordinate NADPH. Residues Asn56, 69–72, and 95–97 each bind NADP(+); these read AVKP and CAA. Position 164 (Glu164) interacts with L-proline. Asn230 is a binding site for NADPH. 2 residues coordinate L-proline: Ala237 and Thr238. Position 278 is a phosphoserine (Ser278). The segment at 292–320 is disordered; it reads LDSPPGTSLAPSGHSKLLPRSMAPAGKQD.

This sequence belongs to the pyrroline-5-carboxylate reductase family. As to quaternary structure, homodecamer; composed of 5 homodimers. Interacts with LTO1.

It localises to the mitochondrion. The enzyme catalyses L-proline + NADP(+) = (S)-1-pyrroline-5-carboxylate + NADPH + 2 H(+). It catalyses the reaction L-proline + NAD(+) = (S)-1-pyrroline-5-carboxylate + NADH + 2 H(+). Its pathway is amino-acid biosynthesis; L-proline biosynthesis; L-proline from L-glutamate 5-semialdehyde: step 1/1. In terms of biological role, oxidoreductase that catalyzes the last step in proline biosynthesis, which corresponds to the reduction of pyrroline-5-carboxylate to L-proline using NAD(P)H. At physiologic concentrations, has higher specific activity in the presence of NADH. Involved in the cellular response to oxidative stress. This chain is Pyrroline-5-carboxylate reductase 1, mitochondrial (PYCR1), found in Bos taurus (Bovine).